A 325-amino-acid polypeptide reads, in one-letter code: Probable tRNA-dihydrouridine synthase 2 (325 aa).

Residue 18–20 coordinates FMN; it reads PME. The active-site Proton donor is the C105. Residues K143, 208–210, and 232–233 each bind FMN; these read NGD and GR.

The protein belongs to the Dus family. FMN serves as cofactor.

It catalyses the reaction a 5,6-dihydrouridine in tRNA + NAD(+) = a uridine in tRNA + NADH + H(+). It carries out the reaction a 5,6-dihydrouridine in tRNA + NADP(+) = a uridine in tRNA + NADPH + H(+). In terms of biological role, catalyzes the synthesis of 5,6-dihydrouridine (D), a modified base found in the D-loop of most tRNAs, via the reduction of the C5-C6 double bond in target uridines. The chain is Probable tRNA-dihydrouridine synthase 2 (dus2) from Bacillus subtilis (strain 168).